We begin with the raw amino-acid sequence, 416 residues long: Lipid II:glycine glycyltransferase (416 aa).

Belongs to the FemABX family.

The protein localises to the cytoplasm. The enzyme catalyses beta-D-GlcNAc-(1-&gt;4)-Mur2Ac(oyl-L-Ala-D-isoglutaminyl-L-Lys-D-Ala-D-Ala)-di-trans,octa-cis-undecaprenyl diphosphate + glycyl-tRNA(Gly) = beta-D-GlcNAc-(1-&gt;4)-Mur2Ac(oyl-L-Ala-D-isoglutaminyl-L-Lys-(N(6)-Gly)-D-Ala-D-Ala)-di-trans,octa-cis-undecaprenyl diphosphate + tRNA(Gly) + H(+). In terms of biological role, catalyzes the incorporation of amino acid(s) into the interchain peptide bridge of peptidoglycan, using aminoacyl-tRNA as amino acid donor. The sequence is that of Lipid II:glycine glycyltransferase (femX) from Staphylococcus epidermidis (strain ATCC 35984 / DSM 28319 / BCRC 17069 / CCUG 31568 / BM 3577 / RP62A).